A 423-amino-acid chain; its full sequence is Lysosomal acid phosphatase (423 aa).

The signal sequence occupies residues 1 to 30; that stretch reads MAGKRSGWSRAALLQLLLGVNLVVMPPTQA. The Lumenal portion of the chain corresponds to 31 to 380; it reads RSLRFVTLLY…QVASGPADTE (350 aa). The active-site Nucleophile is His-42. N-linked (GlcNAc...) asparagine glycans are attached at residues Asn-92, Asn-133, Asn-167, Asn-177, Asn-191, and Asn-267. 3 disulfide bridges follow: Cys-159-Cys-370, Cys-212-Cys-310, and Cys-345-Cys-349. Asp-287 functions as the Proton donor in the catalytic mechanism. N-linked (GlcNAc...) asparagine glycans are attached at residues Asn-322 and Asn-331. Residues 381–401 traverse the membrane as a helical segment; it reads VIVALAVCGSILFLLIVLLLT. The Cytoplasmic segment spans residues 402-423; that stretch reads VLFRMQAQPPGYRHVADGEDHA.

The protein belongs to the histidine acid phosphatase family. The membrane-bound form is converted to the soluble form by sequential proteolytic processing. First, the C-terminal cytoplasmic tail is removed. Cleavage by a lysosomal protease releases the soluble form in the lysosome lumen.

It is found in the lysosome membrane. Its subcellular location is the lysosome lumen. It carries out the reaction a phosphate monoester + H2O = an alcohol + phosphate. The polypeptide is Lysosomal acid phosphatase (ACP2) (Pongo abelii (Sumatran orangutan)).